We begin with the raw amino-acid sequence, 123 residues long: Alpha-lactalbumin (123 aa).

A C-type lysozyme domain is found at 1–123; it reads KQFTKCELSQ…KLEQWLCEEL (123 aa). 4 disulfides stabilise this stretch: C6/C120, C28/C111, C61/C77, and C73/C91. 5 residues coordinate Ca(2+): K79, D82, D84, D87, and D88.

The protein belongs to the glycosyl hydrolase 22 family. Lactose synthase (LS) is a heterodimer of a catalytic component, beta1,4-galactosyltransferase (beta4Gal-T1) and a regulatory component, alpha-lactalbumin (LA). In terms of tissue distribution, mammary gland specific. Secreted in milk.

The protein resides in the secreted. Regulatory subunit of lactose synthase, changes the substrate specificity of galactosyltransferase in the mammary gland making glucose a good acceptor substrate for this enzyme. This enables LS to synthesize lactose, the major carbohydrate component of milk. In other tissues, galactosyltransferase transfers galactose onto the N-acetylglucosamine of the oligosaccharide chains in glycoproteins. This is Alpha-lactalbumin (LALBA) from Equus asinus (Donkey).